The sequence spans 1097 residues: Cyclin-T (1097 aa).

Disordered stretches follow at residues 319–782, 804–936, and 985–1097; these read SNIT…SNGI, LLKP…SLQA, and AAPV…YNKK. Basic and acidic residues predominate over residues 332–350; it reads DSRDRDRDRERERERERDP. Low complexity-rich tracts occupy residues 373 to 390, 420 to 456, 467 to 478, and 489 to 511; these read SSSVSGVPGSSSSSSSSS, PSSHQRSSSSGLGSSGSGSQRSSSSSSSSSQQPGRPS, GMPPVGVGMPPH, and PQQPQQQPVPHPSASNSSASGMS. Positions 580–591 are enriched in polar residues; it reads LPYSQSQSYGHM. Residues 592 to 606 are compositionally biased toward low complexity; it reads QQQPVPQSQQQQMPP. Residues 609-620 are compositionally biased toward polar residues; it reads SQHSLQSKNSLF. The segment covering 652-675 has biased composition (basic and acidic residues); it reads HDYKLNSHPRDKESPKKERLTPTK. A compositionally biased stretch (low complexity) spans 687–698; it reads GSGNSSSGSGSS. The segment covering 860 to 870 has biased composition (basic and acidic residues); it reads GEIKEESSSKS. Basic residues predominate over residues 871 to 883; the sequence is EKKKKKDKHKHKE. Residues 884–895 show a composition bias toward basic and acidic residues; it reads KDKSKDKTEKEE. Ser-916 is modified (phosphoserine). Gly residues predominate over residues 993–1007; sequence GAGGGGYSSSGGSSS. Residues 1016–1031 are compositionally biased toward basic and acidic residues; sequence SDRDRDKESKKNKSQD. The segment covering 1037-1050 has biased composition (gly residues); sequence GAGGGIFNPLGGAG. The segment covering 1087–1097 has biased composition (pro residues); that stretch reads APPPMPVYNKK.

Belongs to the cyclin family. Cyclin C subfamily. In terms of assembly, component of the super elongation complex (SEC), at least composed of Ell, Cdk9, cyclin-T (CycT), lilli and ear. Associates with CDK9 to form P-TEFb.

The protein resides in the nucleus. Functionally, regulatory subunit of the cyclin-dependent kinase pair (CDK9/cyclin T) complex, also called positive transcription elongation factor B (P-TEFb), which is proposed to facilitate the transition from abortive to production elongation by phosphorylating the CTD (carboxy-terminal domain) of the large subunit of RNA polymerase II (RNAP II). The polypeptide is Cyclin-T (CycT) (Drosophila melanogaster (Fruit fly)).